We begin with the raw amino-acid sequence, 127 residues long: V-type proton ATPase subunit F (127 aa).

The protein belongs to the V-ATPase F subunit family. V-ATPase is a heteromultimeric enzyme made up of two complexes: the ATP-hydrolytic V1 complex and the proton translocation V0 complex. The V1 complex consists of three catalytic AB heterodimers that form a heterohexamer, three peripheral stalks each consisting of EG heterodimers, one central rotor including subunits D and F, and the regulatory subunits C and H. The proton translocation complex V0 consists of the proton transport subunit a, a ring of proteolipid subunits c9c'', rotary subunit d, subunits e and f, and the accessory subunits VhaAC45 and ATP6AP2.

Functionally, subunit of the V1 complex of vacuolar(H+)-ATPase (V-ATPase), a multisubunit enzyme composed of a peripheral complex (V1) that hydrolyzes ATP and a membrane integral complex (V0) that translocates protons. V-ATPase is responsible for acidifying and maintaining the pH of intracellular compartments and in some cell types, is targeted to the plasma membrane, where it is responsible for acidifying the extracellular environment. The protein is V-type proton ATPase subunit F (Vha14) of Anopheles gambiae (African malaria mosquito).